A 170-amino-acid chain; its full sequence is Siroheme decarboxylase NirL subunit (170 aa).

This sequence belongs to the Ahb/Nir family. As to quaternary structure, probably forms a complex composed of NirD, NirL, NirG and NirH. All proteins are required for the total conversion of siroheme to didecarboxysiroheme.

It carries out the reaction siroheme + 2 H(+) = 12,18-didecarboxysiroheme + 2 CO2. It functions in the pathway porphyrin-containing compound metabolism. Its function is as follows. Involved in heme d1 biosynthesis. Catalyzes the decarboxylation of siroheme into didecarboxysiroheme. The protein is Siroheme decarboxylase NirL subunit of Stutzerimonas stutzeri (Pseudomonas stutzeri).